A 211-amino-acid chain; its full sequence is Pyruvate dehydrogenase E1 component subunit beta, mitochondrial (211 aa).

Y31 is subject to Phosphotyrosine. Residues I48, A96, I97, D99, and N101 each contribute to the K(+) site.

Heterotetramer of two PDHA1 and two PDHB subunits. The heterotetramer interacts with DLAT, and is part of the multimeric pyruvate dehydrogenase complex that contains multiple copies of pyruvate dehydrogenase (E1), dihydrolipoamide acetyltransferase (DLAT, E2) and lipoamide dehydrogenase (DLD, E3). These subunits are bound to an inner core composed of about 48 DLAT and 12 PDHX molecules. Interacts with DLAT. Thiamine diphosphate serves as cofactor.

The protein resides in the mitochondrion matrix. It catalyses the reaction N(6)-[(R)-lipoyl]-L-lysyl-[protein] + pyruvate + H(+) = N(6)-[(R)-S(8)-acetyldihydrolipoyl]-L-lysyl-[protein] + CO2. The pyruvate dehydrogenase complex catalyzes the overall conversion of pyruvate to acetyl-CoA and CO(2), and thereby links the glycolytic pathway to the tricarboxylic cycle. This Mesocricetus auratus (Golden hamster) protein is Pyruvate dehydrogenase E1 component subunit beta, mitochondrial.